The sequence spans 382 residues: Glutamyl-tRNA reductase (382 aa).

Substrate-binding positions include 38-41, Ser85, 90-92, and Gln96; these read TCNR and ENQ. Cys39 (nucleophile) is an active-site residue. An NADP(+)-binding site is contributed by 164-169; it reads GAGEIG.

This sequence belongs to the glutamyl-tRNA reductase family. In terms of assembly, homodimer.

The enzyme catalyses (S)-4-amino-5-oxopentanoate + tRNA(Glu) + NADP(+) = L-glutamyl-tRNA(Glu) + NADPH + H(+). It functions in the pathway porphyrin-containing compound metabolism; protoporphyrin-IX biosynthesis; 5-aminolevulinate from L-glutamyl-tRNA(Glu): step 1/2. Functionally, catalyzes the NADPH-dependent reduction of glutamyl-tRNA(Glu) to glutamate 1-semialdehyde (GSA). This chain is Glutamyl-tRNA reductase, found in Methanococcus maripaludis (strain DSM 14266 / JCM 13030 / NBRC 101832 / S2 / LL).